Consider the following 389-residue polypeptide: GRFGGKYVPETLMHALTELENAFHALATDDEFQKELDGILKDYVGRESPLYFAERLTEHYKRADGTGPLIYLKREDLNHRGAHKINNAVAQALLAKRLGKQRIIAETGAGQHGVATATVCARFGLQCIIYMGAQDMERQALNVFRMKLLGAEVRAVHSGTATLKDATSEAIRDWVTNVETTHYILGSVAGPHPYPMMVREFHKVIGKETRRQAMHKWGGKPDVLVACVGGGSNAMGLFHEFVEDQDVRLIGVEAAGHGVDTDKHAATLTKGQVGVLHGSMSYLLQDDDGQVIEPHSISAGLDYPGVGPEHSFLKDIGRAEYDSVTDQEALDAFKRVSRLEGIIPALETSHALAYLEKLCPTLPDGVRVVLNCSGRGDKDVHTASKYLDV.

Lys84 is subject to N6-(pyridoxal phosphate)lysine.

This sequence belongs to the TrpB family. As to quaternary structure, tetramer of two alpha and two beta chains. The cofactor is pyridoxal 5'-phosphate.

It is found in the plastid. It localises to the chloroplast. It catalyses the reaction (1S,2R)-1-C-(indol-3-yl)glycerol 3-phosphate + L-serine = D-glyceraldehyde 3-phosphate + L-tryptophan + H2O. It functions in the pathway amino-acid biosynthesis; L-tryptophan biosynthesis; L-tryptophan from chorismate: step 5/5. The beta subunit is responsible for the synthesis of L-tryptophan from indole and L-serine. This chain is Tryptophan synthase beta chain 1 (TSB1), found in Zea mays (Maize).